The sequence spans 778 residues: Ribonucleoside-diphosphate reductase large subunit (778 aa).

Residues serine 177, 192-193 (SC), glycine 221, 419-423 (NLCIE), and 613-617 (PTATS) contribute to the substrate site. Cysteine 193 and cysteine 439 are joined by a disulfide. The active-site Proton acceptor is asparagine 419. Cysteine 421 serves as the catalytic Cysteine radical intermediate. Glutamate 423 functions as the Proton acceptor in the catalytic mechanism.

It belongs to the ribonucleoside diphosphate reductase large chain family. As to quaternary structure, heterotetramer composed of a homodimer of the large subunit (R1) and a homodimer of the small subunit (R2). Larger multisubunit protein complex are also active, composed of (R1)n(R2)n.

It catalyses the reaction a 2'-deoxyribonucleoside 5'-diphosphate + [thioredoxin]-disulfide + H2O = a ribonucleoside 5'-diphosphate + [thioredoxin]-dithiol. Its activity is regulated as follows. Under complex allosteric control mediated by deoxynucleoside triphosphates and ATP binding. The type of nucleotide bound at the specificity site determines substrate preference. It seems probable that ATP makes the enzyme reduce CDP and UDP, dGTP favors ADP reduction and dTTP favors GDP reduction. Its function is as follows. Ribonucleoside-diphosphate reductase holoenzyme provides the precursors necessary for viral DNA synthesis. Allows virus growth in non-dividing cells. Catalyzes the biosynthesis of deoxyribonucleotides from the corresponding ribonucleotides. This is Ribonucleoside-diphosphate reductase large subunit from Ornithodoros (relapsing fever ticks).